A 299-amino-acid polypeptide reads, in one-letter code: tRNA dimethylallyltransferase (299 aa).

Position 13–20 (13–20 (GPTASGKT)) interacts with ATP. Position 15–20 (15–20 (TASGKT)) interacts with substrate. An interaction with substrate tRNA region spans residues 38 to 41 (DSRQ).

The protein belongs to the IPP transferase family. As to quaternary structure, monomer. Requires Mg(2+) as cofactor.

It carries out the reaction adenosine(37) in tRNA + dimethylallyl diphosphate = N(6)-dimethylallyladenosine(37) in tRNA + diphosphate. In terms of biological role, catalyzes the transfer of a dimethylallyl group onto the adenine at position 37 in tRNAs that read codons beginning with uridine, leading to the formation of N6-(dimethylallyl)adenosine (i(6)A). This Prochlorococcus marinus (strain MIT 9515) protein is tRNA dimethylallyltransferase.